The following is a 426-amino-acid chain: Kelch repeat-containing protein At3g27220 (426 aa).

The chain crosses the membrane as a helical span at residues 18 to 38; sequence LMLVLYFTSVLGIGFIAAFLC. Kelch repeat units lie at residues 123–170, 173–222, 224–275, 276–338, and 341–394; these read LLYV…IVTD, YVYV…IWRG, LHVM…VAND, KLLV…WIIV, and SIVI…FWNG.

It is found in the membrane. The protein is Kelch repeat-containing protein At3g27220 of Arabidopsis thaliana (Mouse-ear cress).